Here is a 356-residue protein sequence, read N- to C-terminus: Hyaluronan and proteoglycan link protein 1 (356 aa).

The propeptide occupies 1-9; the sequence is MRSLLLLVL. Residues 40–154 enclose the Ig-like V-type domain; the sequence is PRLLVEAEQA…EGLEDDTAVV (115 aa). Asparagine 58 carries an N-linked (GlcNAc...) asparagine glycan. Disulfide bonds link cysteine 63/cysteine 141, cysteine 183/cysteine 254, cysteine 207/cysteine 228, cysteine 281/cysteine 351, and cysteine 306/cysteine 327. Link domains are found at residues 161 to 256 and 261 to 353; these read VVFP…FCFT and GRFY…YCFR.

It belongs to the HAPLN family. As to expression, ubiquitously expressed.

The protein resides in the secreted. It is found in the extracellular space. The protein localises to the extracellular matrix. Its function is as follows. Stabilizes the aggregates of proteoglycan monomers with hyaluronic acid in the extracellular cartilage matrix. This is Hyaluronan and proteoglycan link protein 1 (Hapln1) from Mus musculus (Mouse).